The primary structure comprises 227 residues: Urease accessory protein UreF (227 aa).

Belongs to the UreF family. UreD, UreF and UreG form a complex that acts as a GTP-hydrolysis-dependent molecular chaperone, activating the urease apoprotein by helping to assemble the nickel containing metallocenter of UreC. The UreE protein probably delivers the nickel.

It is found in the cytoplasm. Functionally, required for maturation of urease via the functional incorporation of the urease nickel metallocenter. In Blochmanniella floridana, this protein is Urease accessory protein UreF.